The chain runs to 101 residues: Non-structural 7a protein (101 aa).

An N-terminal signal peptide occupies residues 1–23; it reads MLVFLHAVLVTALILLLIGRIQL. Residues 76–96 traverse the membrane as a helical segment; it reads LLVVVLRVIFLVLLGFSCYTL.

Belongs to the coronaviruses ns7/ns7a protein family.

It is found in the host membrane. May function in the formation of membrane-bound replication complexes or in the assembly of the virus. The protein is Non-structural 7a protein of Feline enteric coronavirus (strain 79-1683) (FeCoV).